The primary structure comprises 285 residues: Lipoyl synthase (285 aa).

Residues Cys-36, Cys-41, Cys-47, Cys-62, Cys-66, Cys-69, and Ser-275 each coordinate [4Fe-4S] cluster. Positions Phe-48–Lys-264 constitute a Radical SAM core domain.

The protein belongs to the radical SAM superfamily. Lipoyl synthase family. [4Fe-4S] cluster serves as cofactor.

Its subcellular location is the cytoplasm. It catalyses the reaction [[Fe-S] cluster scaffold protein carrying a second [4Fe-4S](2+) cluster] + N(6)-octanoyl-L-lysyl-[protein] + 2 oxidized [2Fe-2S]-[ferredoxin] + 2 S-adenosyl-L-methionine + 4 H(+) = [[Fe-S] cluster scaffold protein] + N(6)-[(R)-dihydrolipoyl]-L-lysyl-[protein] + 4 Fe(3+) + 2 hydrogen sulfide + 2 5'-deoxyadenosine + 2 L-methionine + 2 reduced [2Fe-2S]-[ferredoxin]. Its pathway is protein modification; protein lipoylation via endogenous pathway; protein N(6)-(lipoyl)lysine from octanoyl-[acyl-carrier-protein]: step 2/2. Functionally, catalyzes the radical-mediated insertion of two sulfur atoms into the C-6 and C-8 positions of the octanoyl moiety bound to the lipoyl domains of lipoate-dependent enzymes, thereby converting the octanoylated domains into lipoylated derivatives. This chain is Lipoyl synthase, found in Caldicellulosiruptor saccharolyticus (strain ATCC 43494 / DSM 8903 / Tp8T 6331).